The chain runs to 1240 residues: DNA-directed RNA polymerase subunit beta (1240 aa).

Belongs to the RNA polymerase beta chain family. The RNAP catalytic core consists of 2 alpha, 1 beta, 1 beta' and 1 omega subunit. When a sigma factor is associated with the core the holoenzyme is formed, which can initiate transcription.

The catalysed reaction is RNA(n) + a ribonucleoside 5'-triphosphate = RNA(n+1) + diphosphate. In terms of biological role, DNA-dependent RNA polymerase catalyzes the transcription of DNA into RNA using the four ribonucleoside triphosphates as substrates. This Phytoplasma australiense protein is DNA-directed RNA polymerase subunit beta.